Consider the following 612-residue polypeptide: Chaperone protein DnaK (612 aa).

Phosphothreonine; by autocatalysis is present on threonine 174. The disordered stretch occupies residues 578–612 (GAQAGAQGQGAAGGQKQDGNVYDADYKVVDDDKKE). Basic and acidic residues predominate over residues 601–612 (ADYKVVDDDKKE).

Belongs to the heat shock protein 70 family.

Acts as a chaperone. This is Chaperone protein DnaK from Moorella thermoacetica (strain ATCC 39073 / JCM 9320).